Consider the following 248-residue polypeptide: Adenosylcobinamide-GDP ribazoletransferase (248 aa).

7 consecutive transmembrane segments (helical) span residues 24–44 (EINL…IGAW), 70–90 (VIIT…GLFS), 106–126 (VGAN…ALFL), 134–154 (ICWL…LLFA), 168–188 (IFLG…LAVL), 189–209 (GLFF…FTII), and 228–248 (AGGQ…WGLV).

The protein belongs to the CobS family. Requires Mg(2+) as cofactor.

Its subcellular location is the cell membrane. It catalyses the reaction alpha-ribazole + adenosylcob(III)inamide-GDP = adenosylcob(III)alamin + GMP + H(+). The catalysed reaction is alpha-ribazole 5'-phosphate + adenosylcob(III)inamide-GDP = adenosylcob(III)alamin 5'-phosphate + GMP + H(+). Its pathway is cofactor biosynthesis; adenosylcobalamin biosynthesis; adenosylcobalamin from cob(II)yrinate a,c-diamide: step 7/7. Joins adenosylcobinamide-GDP and alpha-ribazole to generate adenosylcobalamin (Ado-cobalamin). Also synthesizes adenosylcobalamin 5'-phosphate from adenosylcobinamide-GDP and alpha-ribazole 5'-phosphate. In Listeria monocytogenes serovar 1/2a (strain ATCC BAA-679 / EGD-e), this protein is Adenosylcobinamide-GDP ribazoletransferase.